Consider the following 538-residue polypeptide: Putative outer membrane porin BglH (538 aa).

Residues 1-25 form the signal peptide; the sequence is MFRRNIITSAILLMAPLAFSAQSLA.

This sequence belongs to the porin LamB (TC 1.B.3) family.

Its subcellular location is the cell outer membrane. Its function is as follows. May be a sugar porin with a broad carbohydrate specificity. The chain is Putative outer membrane porin BglH (bglH) from Escherichia coli O6:H1 (strain CFT073 / ATCC 700928 / UPEC).